The sequence spans 354 residues: MLKNDRLLRALNRQPVDRTPVWLMRQAGRYLPEYRATRARAGSFLSMAKNPDIACEVTLQPLQRFPLDAAILFSDILTIPDAMGLELYFVEGEGPKFRHPVRDAAAIHRLGVPDMETELRYVMDAVRVIRRELDGSVPLIGFSGSPWTLACYMIEGGGSKEYARIKAMAFNAPEVLHHLLGTVTDAVIAYLAAQRAAGAQALQVFDTWGGVLSPAMYHEFSLPYLTRIAHELERGEGAERTPLVLFGKGNGAYVADLAASGAEAVGVDWTISLADAAQRAGGRVALQGNLDPATLYGSPEAIRTEVGKTLDSYAQGNGGSREGHVLNLGHGMSPDMNPEHVGVLVEAVQRLSKR.

Substrate-binding positions include 25 to 29 (RQAGR), Asp75, Tyr152, Thr207, and His330.

It belongs to the uroporphyrinogen decarboxylase family. In terms of assembly, homodimer.

The protein localises to the cytoplasm. The catalysed reaction is uroporphyrinogen III + 4 H(+) = coproporphyrinogen III + 4 CO2. It participates in porphyrin-containing compound metabolism; protoporphyrin-IX biosynthesis; coproporphyrinogen-III from 5-aminolevulinate: step 4/4. Catalyzes the decarboxylation of four acetate groups of uroporphyrinogen-III to yield coproporphyrinogen-III. In Xanthomonas oryzae pv. oryzae (strain PXO99A), this protein is Uroporphyrinogen decarboxylase.